A 426-amino-acid chain; its full sequence is Histidine--tRNA ligase (426 aa).

The protein belongs to the class-II aminoacyl-tRNA synthetase family. As to quaternary structure, homodimer.

The protein localises to the cytoplasm. It carries out the reaction tRNA(His) + L-histidine + ATP = L-histidyl-tRNA(His) + AMP + diphosphate + H(+). In Hydrogenovibrio crunogenus (strain DSM 25203 / XCL-2) (Thiomicrospira crunogena), this protein is Histidine--tRNA ligase.